Consider the following 313-residue polypeptide: 4-diphosphocytidyl-2-C-methyl-D-erythritol kinase (313 aa).

K27 is an active-site residue. Residue P110–S120 coordinates ATP. The active site involves D152.

The protein belongs to the GHMP kinase family. IspE subfamily.

It carries out the reaction 4-CDP-2-C-methyl-D-erythritol + ATP = 4-CDP-2-C-methyl-D-erythritol 2-phosphate + ADP + H(+). The protein operates within isoprenoid biosynthesis; isopentenyl diphosphate biosynthesis via DXP pathway; isopentenyl diphosphate from 1-deoxy-D-xylulose 5-phosphate: step 3/6. Its function is as follows. Catalyzes the phosphorylation of the position 2 hydroxy group of 4-diphosphocytidyl-2C-methyl-D-erythritol. The chain is 4-diphosphocytidyl-2-C-methyl-D-erythritol kinase from Histophilus somni (strain 129Pt) (Haemophilus somnus).